The primary structure comprises 386 residues: Glucose-1-phosphate adenylyltransferase (386 aa).

Alpha-D-glucose 1-phosphate-binding positions include Tyr-100, Gly-165, 180–181 (EK), and Ser-191.

This sequence belongs to the bacterial/plant glucose-1-phosphate adenylyltransferase family. In terms of assembly, homotetramer.

It catalyses the reaction alpha-D-glucose 1-phosphate + ATP + H(+) = ADP-alpha-D-glucose + diphosphate. Its pathway is glycan biosynthesis; glycogen biosynthesis. In terms of biological role, involved in the biosynthesis of ADP-glucose, a building block required for the elongation reactions to produce glycogen. Catalyzes the reaction between ATP and alpha-D-glucose 1-phosphate (G1P) to produce pyrophosphate and ADP-Glc. This is Glucose-1-phosphate adenylyltransferase from Clostridium botulinum (strain Alaska E43 / Type E3).